Reading from the N-terminus, the 294-residue chain is UDP-3-O-acyl-N-acetylglucosamine deacetylase (294 aa).

Residues His75, His232, and Asp236 each coordinate Zn(2+). Catalysis depends on His259, which acts as the Proton donor.

Belongs to the LpxC family. Requires Zn(2+) as cofactor.

It carries out the reaction a UDP-3-O-[(3R)-3-hydroxyacyl]-N-acetyl-alpha-D-glucosamine + H2O = a UDP-3-O-[(3R)-3-hydroxyacyl]-alpha-D-glucosamine + acetate. It functions in the pathway glycolipid biosynthesis; lipid IV(A) biosynthesis; lipid IV(A) from (3R)-3-hydroxytetradecanoyl-[acyl-carrier-protein] and UDP-N-acetyl-alpha-D-glucosamine: step 2/6. Its function is as follows. Catalyzes the hydrolysis of UDP-3-O-myristoyl-N-acetylglucosamine to form UDP-3-O-myristoylglucosamine and acetate, the committed step in lipid A biosynthesis. This Campylobacter jejuni subsp. jejuni serotype O:23/36 (strain 81-176) protein is UDP-3-O-acyl-N-acetylglucosamine deacetylase.